The chain runs to 505 residues: GDP-Man:Man(3)GlcNAc(2)-PP-Dol alpha-1,2-mannosyltransferase (505 aa).

Topologically, residues 1–3 (MDE) are lumenal. Residues 4–24 (LIMMVFVLFTIVLLLTVSMTL) form a helical membrane-spanning segment. The Cytoplasmic portion of the chain corresponds to 25–145 (AALISTIVVL…KWVEASTYPR (121 aa)). An intramembrane region (helical) is located at residues 146-166 (FTLIGQSLGSMILGWEALTKF). At 167–402 (VPTIFLDSMG…VGIHTMYNEH (236 aa)) the chain is on the cytoplasmic side. The helical intramembrane region spans 403–423 (FGIGVVELMAAGVIPVANNSA). Over 424-505 (GPKEDIVRHE…NNNSSSKKRN (82 aa)) the chain is Cytoplasmic.

Belongs to the glycosyltransferase group 1 family.

The protein resides in the endoplasmic reticulum membrane. It catalyses the reaction an alpha-D-Man-(1-&gt;3)-[alpha-D-Man-(1-&gt;6)]-beta-D-Man-(1-&gt;4)-beta-D-GlcNAc-(1-&gt;4)-alpha-D-GlcNAc-diphospho-di-trans,poly-cis-dolichol + 2 GDP-alpha-D-mannose = an alpha-D-Man-(1-&gt;2)-alpha-D-Man-(1-&gt;2)-alpha-D-Man-(1-&gt;3)-[alpha-D-Man-(1-&gt;6)]-beta-D-Man-(1-&gt;4)-beta-D-GlcNAc-(1-&gt;4)-alpha-D-GlcNAc-diphospho-di-trans,poly-cis-dolichol + 2 GDP + 2 H(+). Its pathway is protein modification; protein glycosylation. Functionally, GDP-Man:Man(3)GlcNAc(2)-PP-Dol alpha-1,2-mannosyltransferase that operates in the biosynthetic pathway of dolichol-linked oligosaccharides, the glycan precursors employed in protein asparagine (N)-glycosylation. The assembly of dolichol-linked oligosaccharides begins on the cytosolic side of the endoplasmic reticulum membrane and finishes in its lumen. The sequential addition of sugars to dolichol pyrophosphate produces dolichol-linked oligosaccharides containing fourteen sugars, including two GlcNAcs, nine mannoses and three glucoses. Once assembled, the oligosaccharide is transferred from the lipid to nascent proteins by oligosaccharyltransferases. Catalyzes, on the cytoplasmic face of the endoplasmic reticulum, the addition of the fourth and fifth mannose residues to the dolichol-linked oligosaccharide chain, to produce Man(5)GlcNAc(2)-PP-dolichol core oligosaccharide. In Dictyostelium discoideum (Social amoeba), this protein is GDP-Man:Man(3)GlcNAc(2)-PP-Dol alpha-1,2-mannosyltransferase (alg11).